Consider the following 201-residue polypeptide: MSRYRGPRFKKIRRLGALPGLTSKRPRAGSDLRNQSRSGKKSQYRIRLEEKQKLRFHYGLTERQLLKYVRIAGKAKGSTGQVLLQLLEMRLDNTLFRLGMALTIPQARQLVNHGHILVNGRIVDIPSYRCKPRDIITVKDEQNSRTLVQNLLDSSAPEELPKHLTLHTFQYEGLVNQIIDRKCVGLKINELLVVEYYSRQT.

Positions G20–Y44 are disordered. The 64-residue stretch at M89 to L152 folds into the S4 RNA-binding domain.

Belongs to the universal ribosomal protein uS4 family. In terms of assembly, part of the 30S ribosomal subunit. Contacts protein S5. The interaction surface between S4 and S5 is involved in control of translational fidelity.

It localises to the plastid. The protein localises to the chloroplast. One of the primary rRNA binding proteins, it binds directly to 16S rRNA where it nucleates assembly of the body of the 30S subunit. Its function is as follows. With S5 and S12 plays an important role in translational accuracy. The polypeptide is Small ribosomal subunit protein uS4c (rps4) (Aethionema grandiflorum (Persian stone-cress)).